A 212-amino-acid polypeptide reads, in one-letter code: Protein-L-isoaspartate O-methyltransferase (212 aa).

Residue Ser-60 is part of the active site.

This sequence belongs to the methyltransferase superfamily. L-isoaspartyl/D-aspartyl protein methyltransferase family.

It is found in the cytoplasm. The enzyme catalyses [protein]-L-isoaspartate + S-adenosyl-L-methionine = [protein]-L-isoaspartate alpha-methyl ester + S-adenosyl-L-homocysteine. Its function is as follows. Catalyzes the methyl esterification of L-isoaspartyl residues in peptides and proteins that result from spontaneous decomposition of normal L-aspartyl and L-asparaginyl residues. It plays a role in the repair and/or degradation of damaged proteins. This is Protein-L-isoaspartate O-methyltransferase from Methanococcus maripaludis (strain DSM 14266 / JCM 13030 / NBRC 101832 / S2 / LL).